Reading from the N-terminus, the 327-residue chain is E3 ubiquitin-protein ligase SINAT4 (327 aa).

The interval 1-27 (METDSMECVSSTGNEIHQNGNGHQSYQ) is disordered. A compositionally biased stretch (polar residues) spans 8–27 (CVSSTGNEIHQNGNGHQSYQ). The RING-type zinc-finger motif lies at 64–100 (CPVCTYSMYPPIHQCHNGHTLCSTCKVRVHNRCPTCR). Residues 114–307 (VAESLELPCK…KELKLRVTGK (194 aa)) are SBD. The SIAH-type zinc-finger motif lies at 117-177 (SLELPCKFYN…LVAHLRDDHK (61 aa)). Zn(2+) contacts are provided by cysteine 122, cysteine 129, histidine 141, cysteine 145, cysteine 152, cysteine 159, histidine 171, and histidine 176.

Belongs to the SINA (Seven in absentia) family. As to quaternary structure, interacts with SINAT6. Interacts with WAV3. Interacts with FREE1. Interacts with ELC/VPS23A.

It localises to the endosome. The protein resides in the multivesicular body. It is found in the cytoplasmic vesicle. Its subcellular location is the autophagosome. The enzyme catalyses S-ubiquitinyl-[E2 ubiquitin-conjugating enzyme]-L-cysteine + [acceptor protein]-L-lysine = [E2 ubiquitin-conjugating enzyme]-L-cysteine + N(6)-ubiquitinyl-[acceptor protein]-L-lysine.. Its pathway is protein modification; protein ubiquitination. Its function is as follows. E3 ubiquitin-protein ligase that mediates ubiquitination and subsequent proteasomal degradation of target proteins. E3 ubiquitin ligases accept ubiquitin from an E2 ubiquitin-conjugating enzyme in the form of a thioester and then directly transfers the ubiquitin to targeted substrates. It probably triggers the ubiquitin-mediated degradation of different substrates. Modulates directly the ubiquitination and proteasomal-dependent degradation of FREE1, a component of the ESCRT-I complex. Modulates directly the ubiquitination and proteasomal-dependent degradation of ELC/VPS23A, a component of the ESCRT-I complex. In Arabidopsis thaliana (Mouse-ear cress), this protein is E3 ubiquitin-protein ligase SINAT4.